The following is a 105-amino-acid chain: MSQLFVCTVEELPDGGARKVEYTPDIALFHYDGEFFAVDDRCSHGNASISEGYLEDNATVECPLHTASFCLRTGKALCLPATDPLKTYPVVVKDGNIYITVSEEQ.

One can recognise a Rieske domain in the interval 4-99 (LFVCTVEELP…VVVKDGNIYI (96 aa)). The [2Fe-2S] cluster site is built by Cys42, His44, Cys62, and His65.

It belongs to the bacterial ring-hydroxylating dioxygenase ferredoxin component family. This dioxygenase system consists of four proteins: the two subunits of the hydroxylase component (HcaE and HcaF), a ferredoxin (HcaC) and a ferredoxin reductase (HcaD). [2Fe-2S] cluster serves as cofactor.

Its pathway is aromatic compound metabolism; 3-phenylpropanoate degradation. Functionally, part of the multicomponent 3-phenylpropionate dioxygenase, that converts 3-phenylpropionic acid (PP) and cinnamic acid (CI) into 3-phenylpropionate-dihydrodiol (PP-dihydrodiol) and cinnamic acid-dihydrodiol (CI-dihydrodiol), respectively. This protein seems to be a 2Fe-2S ferredoxin. The chain is 3-phenylpropionate/cinnamic acid dioxygenase ferredoxin subunit from Photorhabdus laumondii subsp. laumondii (strain DSM 15139 / CIP 105565 / TT01) (Photorhabdus luminescens subsp. laumondii).